Consider the following 230-residue polypeptide: 2,3-bisphosphoglycerate-dependent phosphoglycerate mutase (230 aa).

Residues 10–17 (RHGESKWN), 23–24 (TG), Arg62, 89–92 (ERNY), Lys100, 116–117 (RR), and 185–186 (GN) each bind substrate. Residue His11 is the Tele-phosphohistidine intermediate of the active site. Glu89 (proton donor/acceptor) is an active-site residue.

This sequence belongs to the phosphoglycerate mutase family. BPG-dependent PGAM subfamily. As to quaternary structure, homodimer.

It catalyses the reaction (2R)-2-phosphoglycerate = (2R)-3-phosphoglycerate. The protein operates within carbohydrate degradation; glycolysis; pyruvate from D-glyceraldehyde 3-phosphate: step 3/5. Its function is as follows. Catalyzes the interconversion of 2-phosphoglycerate and 3-phosphoglycerate. The sequence is that of 2,3-bisphosphoglycerate-dependent phosphoglycerate mutase from Buchnera aphidicola subsp. Cinara cedri (strain Cc).